Reading from the N-terminus, the 443-residue chain is Enolase (443 aa).

Gln-167 serves as a coordination point for (2R)-2-phosphoglycerate. The Proton donor role is filled by Glu-209. Mg(2+)-binding residues include Asp-246, Glu-291, and Asp-318. 4 residues coordinate (2R)-2-phosphoglycerate: Lys-343, Arg-372, Ser-373, and Lys-394. Residue Lys-343 is the Proton acceptor of the active site.

The protein belongs to the enolase family. As to quaternary structure, component of the RNA degradosome, a multiprotein complex involved in RNA processing and mRNA degradation. Mg(2+) serves as cofactor.

The protein localises to the cytoplasm. It is found in the secreted. The protein resides in the cell surface. The catalysed reaction is (2R)-2-phosphoglycerate = phosphoenolpyruvate + H2O. The protein operates within carbohydrate degradation; glycolysis; pyruvate from D-glyceraldehyde 3-phosphate: step 4/5. Its function is as follows. Catalyzes the reversible conversion of 2-phosphoglycerate (2-PG) into phosphoenolpyruvate (PEP). It is essential for the degradation of carbohydrates via glycolysis. In Wigglesworthia glossinidia brevipalpis, this protein is Enolase.